The sequence spans 354 residues: Ferrochelatase (354 aa).

The Fe cation site is built by His-191 and Glu-271.

This sequence belongs to the ferrochelatase family.

It is found in the cytoplasm. It carries out the reaction heme b + 2 H(+) = protoporphyrin IX + Fe(2+). It functions in the pathway porphyrin-containing compound metabolism; protoheme biosynthesis; protoheme from protoporphyrin-IX: step 1/1. Catalyzes the ferrous insertion into protoporphyrin IX. In Rickettsia bellii (strain OSU 85-389), this protein is Ferrochelatase.